The primary structure comprises 675 residues: Rho GTPase-activating protein 40 (675 aa).

2 disordered regions span residues 95–118 and 187–218; these read RDELREEDSGGNEGQLPEEGEAES and KMSSENGDSGMKGAQLSSGASKFPPAAEPGGL. The segment covering 103–116 has biased composition (acidic residues); it reads SGGNEGQLPEEGEA. The region spanning 323–522 is the Rho-GAP domain; that stretch reads VPLDSLLEAD…IMVHYQDLLW (200 aa).

In terms of biological role, GTPase activator for the Rho-type GTPases by converting them to an inactive GDP-bound state. This Homo sapiens (Human) protein is Rho GTPase-activating protein 40.